Here is a 263-residue protein sequence, read N- to C-terminus: Receptor-transporting protein 1 (263 aa).

Topologically, residues 1-238 (MRIFRPWRLR…ETGSGWNFCS (238 aa)) are cytoplasmic. Residues 88 to 197 (ASGRFHCSWC…GEFCEACQEG (110 aa)) form a 3CxxC-type zinc finger. Residues 239–259 (IPWCLFWATVLLLIIYLQLSF) form a helical membrane-spanning segment. At 260 to 263 (RSSV) the chain is on the extracellular side.

It belongs to the TMEM7 family. As to quaternary structure, interacts with olfactory receptors.

Its subcellular location is the cell membrane. In terms of biological role, specifically promotes functional cell surface expression of olfactory receptors, but not of other GPCRs. The polypeptide is Receptor-transporting protein 1 (RTP1) (Macaca fascicularis (Crab-eating macaque)).